Here is a 191-residue protein sequence, read N- to C-terminus: 3-isopropylmalate dehydratase small subunit (191 aa).

The protein belongs to the LeuD family. LeuD type 1 subfamily. Heterodimer of LeuC and LeuD.

The catalysed reaction is (2R,3S)-3-isopropylmalate = (2S)-2-isopropylmalate. Its pathway is amino-acid biosynthesis; L-leucine biosynthesis; L-leucine from 3-methyl-2-oxobutanoate: step 2/4. Its function is as follows. Catalyzes the isomerization between 2-isopropylmalate and 3-isopropylmalate, via the formation of 2-isopropylmaleate. This chain is 3-isopropylmalate dehydratase small subunit, found in Anaeromyxobacter sp. (strain K).